The primary structure comprises 527 residues: Probable malate:quinone oxidoreductase (527 aa).

It belongs to the MQO family. Requires FAD as cofactor.

The catalysed reaction is (S)-malate + a quinone = a quinol + oxaloacetate. Its pathway is carbohydrate metabolism; tricarboxylic acid cycle; oxaloacetate from (S)-malate (quinone route): step 1/1. The sequence is that of Probable malate:quinone oxidoreductase from Pectobacterium atrosepticum (strain SCRI 1043 / ATCC BAA-672) (Erwinia carotovora subsp. atroseptica).